The following is a 228-amino-acid chain: Probable septum site-determining protein MinC (228 aa).

It belongs to the MinC family. As to quaternary structure, interacts with MinD and FtsZ.

Functionally, cell division inhibitor that blocks the formation of polar Z ring septums. Rapidly oscillates between the poles of the cell to destabilize FtsZ filaments that have formed before they mature into polar Z rings. Prevents FtsZ polymerization. This chain is Probable septum site-determining protein MinC, found in Pectobacterium atrosepticum (strain SCRI 1043 / ATCC BAA-672) (Erwinia carotovora subsp. atroseptica).